Consider the following 137-residue polypeptide: Nucleoside diphosphate kinase (137 aa).

Positions 11, 59, 87, 93, 104, and 114 each coordinate ATP. The active-site Pros-phosphohistidine intermediate is histidine 117.

Belongs to the NDK family. In terms of assembly, homotetramer. Mg(2+) serves as cofactor.

It localises to the cytoplasm. It carries out the reaction a 2'-deoxyribonucleoside 5'-diphosphate + ATP = a 2'-deoxyribonucleoside 5'-triphosphate + ADP. It catalyses the reaction a ribonucleoside 5'-diphosphate + ATP = a ribonucleoside 5'-triphosphate + ADP. Functionally, major role in the synthesis of nucleoside triphosphates other than ATP. The ATP gamma phosphate is transferred to the NDP beta phosphate via a ping-pong mechanism, using a phosphorylated active-site intermediate. The chain is Nucleoside diphosphate kinase from Frankia casuarinae (strain DSM 45818 / CECT 9043 / HFP020203 / CcI3).